The sequence spans 190 residues: RNA pyrophosphohydrolase (190 aa).

In terms of domain architecture, Nudix hydrolase spans 6-149 (GYRPNVGIVL…KRGVYARALC (144 aa)). Residues 38 to 59 (GGMHSDETPVEAMYRELNEETG) carry the Nudix box motif.

It belongs to the Nudix hydrolase family. RppH subfamily. It depends on a divalent metal cation as a cofactor.

In terms of biological role, accelerates the degradation of transcripts by removing pyrophosphate from the 5'-end of triphosphorylated RNA, leading to a more labile monophosphorylated state that can stimulate subsequent ribonuclease cleavage. This is RNA pyrophosphohydrolase from Xylella fastidiosa (strain 9a5c).